A 184-amino-acid polypeptide reads, in one-letter code: Leucine-rich repeat-containing protein 20 (184 aa).

5 LRR repeats span residues 51–72, 75–96, 98–120, 121–141, and 145–167; these read QIHLITLANNELKSLTSKFMTT, QLRELHLEGNFLHRLPSEVSAL, HLKAIDLSRNQFQDFPEQLTALP, ALETINLEENEIVDVPVEKLA, and ALRSINLRFNPLNAEVRVIAPPL. A Phosphoserine modification is found at serine 175.

In Homo sapiens (Human), this protein is Leucine-rich repeat-containing protein 20 (LRRC20).